Reading from the N-terminus, the 149-residue chain is Putative sugar phosphate isomerase YwlF (149 aa).

Residue His9 participates in substrate binding. The active-site Proton acceptor is Cys66. 67-72 (GTGIGM) serves as a coordination point for substrate. Residue His99 is the Proton donor of the active site. Arg133 provides a ligand contact to substrate.

The protein belongs to the LacAB/RpiB family.

The chain is Putative sugar phosphate isomerase YwlF (ywlF) from Bacillus subtilis (strain 168).